The sequence spans 180 residues: NADH-quinone oxidoreductase subunit B (180 aa).

Residues Cys59, Cys60, Cys124, and Cys154 each coordinate [4Fe-4S] cluster.

The protein belongs to the complex I 20 kDa subunit family. NDH-1 is composed of 14 different subunits. Subunits NuoB, C, D, E, F, and G constitute the peripheral sector of the complex. It depends on [4Fe-4S] cluster as a cofactor.

The protein resides in the cell inner membrane. It carries out the reaction a quinone + NADH + 5 H(+)(in) = a quinol + NAD(+) + 4 H(+)(out). Its function is as follows. NDH-1 shuttles electrons from NADH, via FMN and iron-sulfur (Fe-S) centers, to quinones in the respiratory chain. The immediate electron acceptor for the enzyme in this species is believed to be ubiquinone. Couples the redox reaction to proton translocation (for every two electrons transferred, four hydrogen ions are translocated across the cytoplasmic membrane), and thus conserves the redox energy in a proton gradient. The protein is NADH-quinone oxidoreductase subunit B of Beijerinckia indica subsp. indica (strain ATCC 9039 / DSM 1715 / NCIMB 8712).